The chain runs to 1281 residues: Protein ETHYLENE-INSENSITIVE 2 (1281 aa).

The Cytoplasmic segment spans residues 1-21 (MDGQQLRSSESPASGGGGVTG). Residues 22 to 42 (GGAPHLFHALGPALLISIGYI) traverse the membrane as a helical segment. Over 43 to 61 (DLGKWVAAVEAGSRFGLDL) the chain is Extracellular. The helical transmembrane segment at 62-82 (VLLALLFNFMAILCQYLAACI) threads the bilayer. Over 83 to 112 (GTVTGRSLAEICHQEYSRPTCIFLGVQAGL) the chain is Cytoplasmic. A helical membrane pass occupies residues 113-133 (SLLTSELTMIFGIALGFNLLF). The Extracellular portion of the chain corresponds to 134-137 (EYDD). A helical transmembrane segment spans residues 138–158 (LITGICFATVVPNLLPYAISH). Over 159–163 (LGKKM) the chain is Cytoplasmic. Residues 164 to 184 (VGTLNACIAGFALLCYVLGLL) traverse the membrane as a helical segment. Topologically, residues 185–208 (VSQPQIPLTTNVIFPKLSGESAYS) are extracellular. A helical membrane pass occupies residues 209–229 (LMALLGANVMAHNFYIHSSVV). The Cytoplasmic portion of the chain corresponds to 230–238 (QGQKRSAFA). Residues 239–259 (VGALFHDHLFSVLFIFTGIFL) form a helical membrane-spanning segment. The Extracellular portion of the chain corresponds to 260-297 (VNHVLMNSAAADSTNTLLLTFQDVVELMNQIFVNPMAP). The helical transmembrane segment at 298-318 (TIFLVVLLFSSHIISLTSAIG) threads the bilayer. Residues 319-325 (SQVISQH) lie on the Cytoplasmic side of the membrane. Residues 326–346 (LFGINLPLSGHHLILKAFAIV) form a helical membrane-spanning segment. Topologically, residues 347 to 362 (PALYCAKVAGAEGIYQ) are extracellular. Residues 363-383 (LLIICQIIQAMLLPSSVVPLF) form a helical membrane-spanning segment. Residues 384–400 (RVASSRLIMGAHRVSLH) lie on the Cytoplasmic side of the membrane. The chain crosses the membrane as a helical span at residues 401 to 421 (LEILTFLAFLLMLFSNIIFMA). Residues 422 to 447 (EMLFGDSGWLNTLKGNTGSPVVFPST) lie on the Extracellular side of the membrane. Residues 448–468 (VLITVACVSVAFSLYMAVTPL) form a helical membrane-spanning segment. Topologically, residues 469 to 1281 (KSGSHEAELQ…KRRLSSKGQQ (813 aa)) are cytoplasmic. 2 disordered regions span residues 540-565 (IESD…SPSF) and 593-665 (ESTV…NGSG). Residues 548–557 (HSTAHTSTAP) show a composition bias toward polar residues. The segment covering 599-610 (VDSKSTGERDIE) has biased composition (basic and acidic residues).

Belongs to the NRAMP (TC 2.A.55) family. As to expression, expressed in roots, leaf sheaths, leaf blades, flowers, developing seeds, germinating seeds and young seedlings. Expressed in adventitious roots, vascular tissues of the seminal roots, lateral roots, the connecting region between vascular tissues and lateral roots, mature leaf, mature stem, tips of adventitious roots derived from the node, shoot apex, young panicle, anthers, pistil, stigma, ovary, seed coat and fruit coat pericarp.

The protein localises to the membrane. Central factor in ethylene signaling pathways that control development, senescence and grain size. Acts as a positive component of the ethylene-signaling pathway. This is Protein ETHYLENE-INSENSITIVE 2 from Oryza sativa subsp. japonica (Rice).